A 372-amino-acid polypeptide reads, in one-letter code: Lipoyl synthase, mitochondrial (372 aa).

Residues cysteine 106, cysteine 111, cysteine 117, cysteine 137, cysteine 141, cysteine 144, and serine 352 each coordinate [4Fe-4S] cluster. The Radical SAM core domain maps to 122-341 (EYGTATATIM…EKAGNELGFL (220 aa)).

It belongs to the radical SAM superfamily. Lipoyl synthase family. [4Fe-4S] cluster is required as a cofactor.

The protein resides in the mitochondrion. It carries out the reaction [[Fe-S] cluster scaffold protein carrying a second [4Fe-4S](2+) cluster] + N(6)-octanoyl-L-lysyl-[protein] + 2 oxidized [2Fe-2S]-[ferredoxin] + 2 S-adenosyl-L-methionine + 4 H(+) = [[Fe-S] cluster scaffold protein] + N(6)-[(R)-dihydrolipoyl]-L-lysyl-[protein] + 4 Fe(3+) + 2 hydrogen sulfide + 2 5'-deoxyadenosine + 2 L-methionine + 2 reduced [2Fe-2S]-[ferredoxin]. It participates in protein modification; protein lipoylation via endogenous pathway; protein N(6)-(lipoyl)lysine from octanoyl-[acyl-carrier-protein]: step 2/2. In terms of biological role, catalyzes the radical-mediated insertion of two sulfur atoms into the C-6 and C-8 positions of the octanoyl moiety bound to the lipoyl domains of lipoate-dependent enzymes, thereby converting the octanoylated domains into lipoylated derivatives. This is Lipoyl synthase, mitochondrial (lias) from Xenopus laevis (African clawed frog).